Consider the following 227-residue polypeptide: uncharacterized protein (227 aa).

2 consecutive transmembrane segments (helical) span residues 113–133 (IMLI…FIVF) and 141–161 (FGIC…NGLI).

The protein resides in the membrane. This is an uncharacterized protein from Dictyostelium discoideum (Social amoeba).